Consider the following 115-residue polypeptide: Large ribosomal subunit protein bL19 (115 aa).

The protein belongs to the bacterial ribosomal protein bL19 family.

This protein is located at the 30S-50S ribosomal subunit interface and may play a role in the structure and function of the aminoacyl-tRNA binding site. This chain is Large ribosomal subunit protein bL19, found in Latilactobacillus sakei subsp. sakei (strain 23K) (Lactobacillus sakei subsp. sakei).